The primary structure comprises 247 residues: Ribosomal RNA small subunit methyltransferase G (247 aa).

S-adenosyl-L-methionine-binding residues include Gly86, Leu91, and Arg154.

This sequence belongs to the methyltransferase superfamily. RNA methyltransferase RsmG family.

Its subcellular location is the cytoplasm. In terms of biological role, specifically methylates the N7 position of a guanine in 16S rRNA. This is Ribosomal RNA small subunit methyltransferase G from Leptospira biflexa serovar Patoc (strain Patoc 1 / Ames).